The primary structure comprises 264 residues: Tryptophan synthase alpha chain (264 aa).

Active-site proton acceptor residues include Glu-49 and Asp-60.

It belongs to the TrpA family. Tetramer of two alpha and two beta chains.

It carries out the reaction (1S,2R)-1-C-(indol-3-yl)glycerol 3-phosphate + L-serine = D-glyceraldehyde 3-phosphate + L-tryptophan + H2O. It functions in the pathway amino-acid biosynthesis; L-tryptophan biosynthesis; L-tryptophan from chorismate: step 5/5. The alpha subunit is responsible for the aldol cleavage of indoleglycerol phosphate to indole and glyceraldehyde 3-phosphate. This is Tryptophan synthase alpha chain from Laribacter hongkongensis (strain HLHK9).